Here is a 36-residue protein sequence, read N- to C-terminus: Amanexitide proprotein 2 (36 aa).

A propeptide spanning residues 1-10 is cleaved from the precursor; that stretch reads MSDINATRLP. The cyclopeptide (Val-Pro) cross-link spans 11–19; sequence VFSLPVFFP. A propeptide spanning residues 20–36 is cleaved from the precursor; the sequence is FVSDDIQAVLTRGESLC.

It belongs to the MSDIN fungal toxin family. Post-translationally, processed by the macrocyclase-peptidase enzyme POPB to yield a toxic cyclic nonapeptide. POPB first removes 10 residues from the N-terminus. Conformational trapping of the remaining peptide forces the enzyme to release this intermediate rather than proceed to macrocyclization. The enzyme rebinds the remaining peptide in a different conformation and catalyzes macrocyclization of the N-terminal 9 residues. In terms of tissue distribution, expressed in basidiocarps.

Its function is as follows. Cyclic nonapeptide that belongs to the MSDIN-like toxin family responsible for a large number of food poisoning cases and deaths. The protein is Amanexitide proprotein 2 of Amanita exitialis (Guangzhou destroying angel).